The chain runs to 188 residues: Guanylate kinase (188 aa).

The Guanylate kinase-like domain maps to 2–183; it reads TKLIIISAPS…CVEQIRKAIA (182 aa). 9 to 16 contributes to the ATP binding site; it reads APSGTGKS.

This sequence belongs to the guanylate kinase family.

The protein resides in the cytoplasm. The catalysed reaction is GMP + ATP = GDP + ADP. Essential for recycling GMP and indirectly, cGMP. In Porphyromonas gingivalis (strain ATCC BAA-308 / W83), this protein is Guanylate kinase.